The primary structure comprises 281 residues: Probable catechol O-methyltransferase 2 (281 aa).

7 residues coordinate S-adenosyl-L-methionine: isoleucine 78, glutamate 100, serine 108, glutamate 127, valine 128, alanine 156, and aspartate 183. Aspartate 183 is a binding site for Mg(2+). Lysine 186 serves as a coordination point for substrate. Positions 211 and 212 each coordinate Mg(2+). Asparagine 212 is a substrate binding site.

The protein belongs to the class I-like SAM-binding methyltransferase superfamily. Cation-dependent O-methyltransferase family. Mg(2+) is required as a cofactor.

It localises to the vacuole. It carries out the reaction a catechol + S-adenosyl-L-methionine = a guaiacol + S-adenosyl-L-homocysteine + H(+). This Schizosaccharomyces pombe (strain 972 / ATCC 24843) (Fission yeast) protein is Probable catechol O-methyltransferase 2.